The sequence spans 631 residues: PTS system glucosamine-specific EIICBA component (631 aa).

The PTS EIIC type-1 domain occupies 3–382 (KKAFQILQQL…WNLKTPGRET (380 aa)). Helical transmembrane passes span 12–32 (LGRA…LLRF), 56–76 (LIFA…AGLA), 106–126 (HLID…AYLY), 149–169 (IITS…WPLI), 196–216 (LLIP…MMGE), 243–263 (FMMG…LAII), 298–318 (FLFV…VIFV), and 350–370 (VVIP…RFAI). The 82-residue stretch at 397–478 (DQLAFHVLQA…KTIMAGGVPA (82 aa)) folds into the PTS EIIB type-1 domain. The active-site Phosphocysteine intermediate; for EIIB activity is the Cys-419. At Cys-419 the chain carries Phosphocysteine. A PTS EIIA type-1 domain is found at 515 to 619 (DQVFSEKMMG…SAITPVIFTN (105 aa)). The active-site Tele-phosphohistidine intermediate; for EIIA activity is His-567. Residue His-567 is modified to Phosphohistidine.

It is found in the cell membrane. The catalysed reaction is D-glucosamine(out) + N(pros)-phospho-L-histidyl-[protein] = D-glucosamine 6-phosphate(in) + L-histidyl-[protein]. In terms of biological role, the phosphoenolpyruvate-dependent sugar phosphotransferase system (sugar PTS), a major carbohydrate active transport system, catalyzes the phosphorylation of incoming sugar substrates concomitantly with their translocation across the cell membrane. This system is involved in glucosamine transport. In vitro, when expressed in the absence of GamR and NagP, can transport N-acetylglucosamine. Its function is as follows. In addition, plays an important role in the phosphorylation of EIIA-deficient PTS transporters. The EIIA domain can transfer a phosphoryl group to EIIA-deficient PTS transporters, enabling growth with maltose, N-acetylglucosamine, sucrose or trehalose as the sole carbon source. The polypeptide is PTS system glucosamine-specific EIICBA component (Bacillus subtilis (strain 168)).